A 160-amino-acid polypeptide reads, in one-letter code: Small ribosomal subunit protein uS19 (160 aa).

Belongs to the universal ribosomal protein uS19 family.

In terms of biological role, protein S19 forms a complex with S13 that binds strongly to the 16S ribosomal RNA. The sequence is that of Small ribosomal subunit protein uS19 from Pyrobaculum islandicum (strain DSM 4184 / JCM 9189 / GEO3).